We begin with the raw amino-acid sequence, 230 residues long: UPF0494 membrane protein PB2B2.14c (230 aa).

Helical transmembrane passes span 78–98 (WPLL…NFEV), 120–140 (IWGP…GLIY), and 148–168 (AIPL…VAMV).

Belongs to the UPF0494 family.

The protein localises to the membrane. This chain is UPF0494 membrane protein PB2B2.14c, found in Schizosaccharomyces pombe (strain 972 / ATCC 24843) (Fission yeast).